Reading from the N-terminus, the 262-residue chain is Octopine permease ATP-binding protein P (262 aa).

Residues 9-254 (VQLKDIRKNF…PRTDRFRQFL (246 aa)) enclose the ABC transporter domain. Residue 41 to 48 (GSSGSGKS) coordinates ATP.

The protein belongs to the ABC transporter superfamily.

It is found in the cell inner membrane. Functionally, component of the octopine active transport system probably consisting of four subunits: Q, M, P and T. In Rhizobium radiobacter (Agrobacterium tumefaciens), this protein is Octopine permease ATP-binding protein P (occP).